Consider the following 834-residue polypeptide: Ras GTPase-activating protein 3 (834 aa).

2 C2 domains span residues 1–112 (MAVE…DTWF) and 123–263 (VQGK…EAWY). Alanine 2 is modified (N-acetylalanine). A Phosphotyrosine modification is found at tyrosine 66. A Phosphoserine modification is found at serine 77. Phosphothreonine is present on threonine 110. Residues 346-561 (GRVVPFISAI…DAVKNFLDLI (216 aa)) form the Ras-GAP domain. The 102-residue stretch at 576–677 (ILLKEGFMIK…WIDILTKVSQ (102 aa)) folds into the PH domain. The Btk-type zinc-finger motif lies at 679-715 (NQKRLAVYHPSAYLNGHWLCCRASSDTAAGCSPCTGG). Zn(2+) contacts are provided by histidine 687, cysteine 698, cysteine 699, and cysteine 709. The interval 806 to 834 (KYGSQEHPIGDKSFQSYIRQQSETPAHSM) is disordered. Serine 809 and serine 833 each carry phosphoserine. Residues 818-834 (SFQSYIRQQSETPAHSM) are compositionally biased toward polar residues.

Inhibitory regulator of the Ras-cyclic AMP pathway. May bind inositol tetrakisphosphate (IP4). The protein is Ras GTPase-activating protein 3 (RASA3) of Bos taurus (Bovine).